The primary structure comprises 528 residues: GMP synthase [glutamine-hydrolyzing] (528 aa).

Residues 13–204 (SILILDFGSQ…VYKISCCTAD (192 aa)) form the Glutamine amidotransferase type-1 domain. Catalysis depends on Cys-90, which acts as the Nucleophile. Residues His-178 and Glu-180 contribute to the active site. The region spanning 205–403 (WTTETYIEET…LGLPDEIIKR (199 aa)) is the GMPS ATP-PPase domain. ATP is bound at residue 232-238 (SGGVDSS).

As to quaternary structure, homodimer.

It carries out the reaction XMP + L-glutamine + ATP + H2O = GMP + L-glutamate + AMP + diphosphate + 2 H(+). It functions in the pathway purine metabolism; GMP biosynthesis; GMP from XMP (L-Gln route): step 1/1. Its function is as follows. Catalyzes the synthesis of GMP from XMP. The chain is GMP synthase [glutamine-hydrolyzing] from Prochlorococcus marinus (strain AS9601).